A 221-amino-acid polypeptide reads, in one-letter code: Late embryogenesis abundant protein, group 3 (221 aa).

The segment at 1-221 (MASHQDKASY…KDSSTITRDH (221 aa)) is disordered. The segment covering 33–42 (TAQHAKDRAA) has biased composition (basic and acidic residues). Positions 43 to 52 (DAAGHAAGKG) are enriched in low complexity. Basic and acidic residues-rich tracts occupy residues 53-63 (QDAKEATKQKA) and 72-147 (KKTD…KQKA). Positions 212-221 (KDSSTITRDH) are enriched in polar residues.

It belongs to the LEA type 4 family.

In Zea mays (Maize), this protein is Late embryogenesis abundant protein, group 3 (MGL3).